The sequence spans 144 residues: Crossover junction endodeoxyribonuclease Hjc (144 aa).

Glutamate 12 is a binding site for Mg(2+). Residue serine 32 is part of the active site. Residues aspartate 42 and glutamate 55 each contribute to the Mg(2+) site.

This sequence belongs to the Holliday junction resolvase Hjc family. Homodimer; forms a 2:1 complex with Hel308 (Hjm). May form a complex with Holliday junction DNA, Hjc and Hjm. Mg(2+) is required as a cofactor.

It carries out the reaction Endonucleolytic cleavage at a junction such as a reciprocal single-stranded crossover between two homologous DNA duplexes (Holliday junction).. With respect to regulation, cleavage stimulated by PCNA123 and PCNA323 and by RadC2. Its function is as follows. A structure-specific endonuclease that resolves Holliday junction (HJ) intermediates during genetic recombination. Cleaves 4-way DNA junctions introducing paired nicks in opposing strands, leaving a 5'-terminal phosphate and a 3'-terminal hydroxyl group that are subsequently ligated to produce recombinant products. Inhibits the helicase activity of Hel308 (Hjm). The protein is Crossover junction endodeoxyribonuclease Hjc of Sulfurisphaera tokodaii (strain DSM 16993 / JCM 10545 / NBRC 100140 / 7) (Sulfolobus tokodaii).